Reading from the N-terminus, the 375-residue chain is Nucleosome assembly protein 1-like 4 (375 aa).

The disordered stretch occupies residues 1-28; sequence MAENSLSDGGPADSVEAAKNASNTEKLT. Ala-2 is subject to N-acetylalanine. Phosphoserine is present on residues Ser-5, Ser-7, and Ser-49. Position 51 is a phosphothreonine (Thr-51). Ser-53 and Ser-54 each carry phosphoserine. Thr-58 carries the post-translational modification Phosphothreonine. Lys-105 is modified (N6-acetyllysine). Ser-125 bears the Phosphoserine mark. Lys-146 bears the N6-acetyllysine mark. The short motif at 265-271 is the Nuclear localization signal element; the sequence is IKKKQKH. Position 304 is a phosphoserine (Ser-304). The interval 339-375 is disordered; the sequence is AIEDDDNFEEGEEGEEEELEGDEEGEDEDDADVNPKV.

This sequence belongs to the nucleosome assembly protein (NAP) family. As to quaternary structure, interacts with core (H2A, H2B, H3, H4) and linker (H1) histones. Post-translationally, polyglutamylated and polyglycylated. These 2 modifications occur exclusively on glutamate residues and result in either polyglutamate or polyglycine chains on the gamma-carboxyl group. Both modifications can coexist on the same protein on adjacent residues, and lowering polyglycylation levels increases polyglutamylation, and reciprocally. Polyglutamylated by TTLL4. In terms of processing, phosphorylated at the G0/G1 boundary but it is not phosphorylated in S-phase. Phosphorylated protein remains in the cytoplasm in a complex with histones during the G0/G1 transition, whereas dephosphorylation triggers its transport into the nucleus at the G1/S-boundary.

The protein resides in the nucleus. Its subcellular location is the cytoplasm. In terms of biological role, acts as a histone chaperone in nucleosome assembly. In condensing spermatids, mediates the loading of the heterodimer composed of histones H2AB1 and H2BC1/TH2B onto the nucleosomes, thereby promoting the replacement of histones to protamine in male germ cells. This chain is Nucleosome assembly protein 1-like 4 (Nap1l4), found in Mus musculus (Mouse).